The chain runs to 488 residues: Leucine-rich repeat-containing protein 74A (488 aa).

LRR repeat units follow at residues alanine 134–glutamate 155, tyrosine 162–serine 182, serine 191–glutamine 212, glutamine 219–glycine 239, glycine 247–asparagine 268, threonine 275–glutamate 296, cysteine 303–lysine 324, and serine 331–isoleucine 351.

The chain is Leucine-rich repeat-containing protein 74A from Homo sapiens (Human).